Reading from the N-terminus, the 546-residue chain is Probable lysosomal cobalamin transporter (546 aa).

4 consecutive transmembrane segments (helical) span residues 8 to 28 (LAQGWIPFTVVVVLAILFSWF), 48 to 68 (IIALFIALMTTALVPVDIFLV), 102 to 122 (ILYALLAFFVFVIIPFMYFFF), and 141 to 161 (YSIGFLIVASVLLLVGAFAPL). The N-linked (GlcNAc...) asparagine glycan is linked to Asn-167. Helical transmembrane passes span 189–209 (TALSLLIGFLTLIGMLIMITY), 304–324 (MVFGAFFLLVALLIFVSLFIT), 352–372 (IIMVYAQIVFPLDYCLFLLVV), and 407–427 (ALLFMCVMLMLIVLSLNVMLF). Residues Asn-444, Asn-452, and Asn-459 are each glycosylated (N-linked (GlcNAc...) asparagine). The helical transmembrane segment at 495 to 515 (VWFFGACYYWGTWLFLVVFMT) threads the bilayer.

The protein belongs to the LIMR family. LMBRD1 subfamily.

The protein localises to the lysosome membrane. Functionally, probable lysosomal cobalamin transporter. Required to export cobalamin from lysosomes allowing its conversion to cofactors. In Nematostella vectensis (Starlet sea anemone), this protein is Probable lysosomal cobalamin transporter.